The chain runs to 524 residues: RNA-splicing ligase RtcB homolog 2 (524 aa).

5 residues coordinate Mn(2+): aspartate 141, cysteine 144, histidine 249, histidine 281, and histidine 372. 248 to 252 is a GMP binding site; that stretch reads NHYLE. GMP is bound by residues 372 to 373, 421 to 424, serine 428, 447 to 450, and lysine 523; these read HN, GGSM, and HGAG. Histidine 447 serves as the catalytic GMP-histidine intermediate.

This sequence belongs to the RtcB family. As to quaternary structure, catalytic component of the tRNA-splicing ligase complex. Mn(2+) is required as a cofactor.

The enzyme catalyses a 3'-end 3'-phospho-ribonucleotide-RNA + a 5'-end dephospho-ribonucleoside-RNA + GTP = a ribonucleotidyl-ribonucleotide-RNA + GMP + diphosphate. It catalyses the reaction a 3'-end 2',3'-cyclophospho-ribonucleotide-RNA + a 5'-end dephospho-ribonucleoside-RNA + GTP + H2O = a ribonucleotidyl-ribonucleotide-RNA + GMP + diphosphate + H(+). Catalytic subunit of the tRNA-splicing ligase complex that acts by directly joining spliced tRNA halves to mature-sized tRNAs by incorporating the precursor-derived splice junction phosphate into the mature tRNA as a canonical 3',5'-phosphodiester. May act as an RNA ligase with broad substrate specificity, and may function toward other RNAs. This chain is RNA-splicing ligase RtcB homolog 2, found in Entamoeba dispar (strain ATCC PRA-260 / SAW760).